Here is a 341-residue protein sequence, read N- to C-terminus: HTH-type transcriptional repressor PurR (341 aa).

Residues 2–56 enclose the HTH lacI-type domain; the sequence is ATIKDVAKHAGVSTTTVSHVINKTRFVAENTKAAVWAAIKELHYSPSAVARSLKV. The segment at residues 4–23 is a DNA-binding region (H-T-H motif); the sequence is IKDVAKHAGVSTTTVSHVIN. A DNA-binding region spans residues 48–56; sequence SAVARSLKV. Positions 73, 190, 192, and 275 each coordinate hypoxanthine.

Homodimer.

It participates in purine metabolism; purine nucleotide biosynthesis [regulation]. In terms of biological role, is the main repressor of the genes involved in the de novo synthesis of purine nucleotides, regulating purB, purC, purEK, purF, purHD, purL, purMN and guaBA expression. PurR is allosterically activated to bind its cognate DNA by binding the purine corepressors, hypoxanthine or guanine, thereby effecting transcription repression. The chain is HTH-type transcriptional repressor PurR from Yersinia pestis bv. Antiqua (strain Antiqua).